Consider the following 79-residue polypeptide: Large ribosomal subunit protein bL31 (79 aa).

It belongs to the bacterial ribosomal protein bL31 family. Type A subfamily. Part of the 50S ribosomal subunit.

In terms of biological role, binds the 23S rRNA. The sequence is that of Large ribosomal subunit protein bL31 (rpmE) from Rickettsia bellii (strain RML369-C).